The sequence spans 166 residues: Large ribosomal subunit protein uL10 (166 aa).

It belongs to the universal ribosomal protein uL10 family. As to quaternary structure, part of the ribosomal stalk of the 50S ribosomal subunit. The N-terminus interacts with L11 and the large rRNA to form the base of the stalk. The C-terminus forms an elongated spine to which L12 dimers bind in a sequential fashion forming a multimeric L10(L12)X complex.

Forms part of the ribosomal stalk, playing a central role in the interaction of the ribosome with GTP-bound translation factors. The protein is Large ribosomal subunit protein uL10 of Limosilactobacillus reuteri (strain DSM 20016) (Lactobacillus reuteri).